A 688-amino-acid chain; its full sequence is Polyribonucleotide nucleotidyltransferase (688 aa).

Positions 484 and 490 each coordinate Mg(2+). Residues 550–609 enclose the KH domain; sequence PTTEIFNVAPDKIVEIIGQGGRVIKEIVEKFEVKIDLNKPSGEVKIMGNKERVLKTKEFI. An S1 motif domain is found at 626 to 688; sequence DEVLEAQVKR…NKGKIALDLA (63 aa).

This sequence belongs to the polyribonucleotide nucleotidyltransferase family. The cofactor is Mg(2+).

It localises to the cytoplasm. It carries out the reaction RNA(n+1) + phosphate = RNA(n) + a ribonucleoside 5'-diphosphate. Functionally, involved in mRNA degradation. Catalyzes the phosphorolysis of single-stranded polyribonucleotides processively in the 3'- to 5'-direction. The polypeptide is Polyribonucleotide nucleotidyltransferase (Helicobacter pylori (strain P12)).